Here is a 161-residue protein sequence, read N- to C-terminus: Nucleotide-binding protein Shal_3198 (161 aa).

This sequence belongs to the YajQ family.

Nucleotide-binding protein. This chain is Nucleotide-binding protein Shal_3198, found in Shewanella halifaxensis (strain HAW-EB4).